A 296-amino-acid polypeptide reads, in one-letter code: uncharacterized protein (296 aa).

Residues 7–26 form a helical membrane-spanning segment; sequence CFSLVCALGASTYLLWRGWL.

It is found in the membrane. This is an uncharacterized protein from Treponema pallidum (strain Nichols).